We begin with the raw amino-acid sequence, 446 residues long: Oxysterols receptor LXR-beta (446 aa).

Positions Met1–Ala69 are disordered. The tract at residues Met1 to Glu76 is transactivation AF-1; required for ligand-independent transactivation function. A compositionally biased stretch (low complexity) spans Ser17–Thr28. Positions His75–Ser152 form a DNA-binding region, nuclear receptor. NR C4-type zinc fingers lie at residues Cys78–Cys98 and Cys116–Cys140. The interval Lys159–Glu201 is disordered. Positions Pro175–Gly196 are enriched in low complexity. Residues Leu205–Glu446 are transactivation AF-2; required for ligand-dependent transactivation function; mediates interaction with CCAR2. The 239-residue stretch at Ala208 to Glu446 folds into the NR LBD domain. Residues Lys395 and Lys433 each participate in a glycyl lysine isopeptide (Lys-Gly) (interchain with G-Cter in SUMO2) cross-link.

Belongs to the nuclear hormone receptor family. NR1 subfamily. In terms of assembly, forms a heterodimer with RXR. Interacts with CCAR2 (via N-terminus) in a ligand-independent manner. Interacts (when sumoylated) with GPS2; interaction with GPS2 onto hepatic acute phase protein promoters prevents N-Cor corepressor complex dissociation. Interacts with ABCA12 and ABCA1; this interaction is required for ABCA1 localization to the cell surface and is necessary for its normal activity and stability. Post-translationally, sumoylated by SUMO2 at Lys-395 and Lys-433 during the hepatic acute phase response, leading to promote interaction with GPS2 and prevent N-Cor corepressor complex dissociation. As to expression, ubiquitous.

The protein resides in the nucleus. Nuclear receptor that exhibits a ligand-dependent transcriptional activation activity. Binds preferentially to double-stranded oligonucleotide direct repeats having the consensus half-site sequence 5'-AGGTCA-3' and 4-nt spacing (DR-4). Regulates cholesterol uptake through MYLIP-dependent ubiquitination of LDLR, VLDLR and LRP8; DLDLR and LRP8. Interplays functionally with RORA for the regulation of genes involved in liver metabolism. Induces LPCAT3-dependent phospholipid remodeling in endoplasmic reticulum (ER) membranes of hepatocytes, driving SREBF1 processing and lipogenesis. Via LPCAT3, triggers the incorporation of arachidonate into phosphatidylcholines of ER membranes, increasing membrane dynamics and enabling triacylglycerols transfer to nascent very low-density lipoprotein (VLDL) particles. Via LPCAT3 also counteracts lipid-induced ER stress response and inflammation, likely by modulating SRC kinase membrane compartmentalization and limiting the synthesis of lipid inflammatory mediators. Plays an anti-inflammatory role during the hepatic acute phase response by acting as a corepressor: inhibits the hepatic acute phase response by preventing dissociation of the N-Cor corepressor complex. The protein is Oxysterols receptor LXR-beta (Nr1h2) of Mus musculus (Mouse).